We begin with the raw amino-acid sequence, 306 residues long: Porphobilinogen deaminase (306 aa).

S-(dipyrrolylmethanemethyl)cysteine is present on cysteine 240.

Belongs to the HMBS family. In terms of assembly, monomer. Dipyrromethane serves as cofactor.

It catalyses the reaction 4 porphobilinogen + H2O = hydroxymethylbilane + 4 NH4(+). It functions in the pathway porphyrin-containing compound metabolism; protoporphyrin-IX biosynthesis; coproporphyrinogen-III from 5-aminolevulinate: step 2/4. In terms of biological role, tetrapolymerization of the monopyrrole PBG into the hydroxymethylbilane pre-uroporphyrinogen in several discrete steps. The sequence is that of Porphobilinogen deaminase from Syntrophomonas wolfei subsp. wolfei (strain DSM 2245B / Goettingen).